Here is an 894-residue protein sequence, read N- to C-terminus: Bifunctional glutamine synthetase adenylyltransferase/adenylyl-removing enzyme (894 aa).

An adenylyl removase region spans residues 1 to 410; it reads MPANTSAAIA…HFEQVFILPS (410 aa). The segment at 415–894 is adenylyl transferase; it reads SHPLSELWLD…QVFEQALDFS (480 aa).

This sequence belongs to the GlnE family. Mg(2+) serves as cofactor.

The enzyme catalyses [glutamine synthetase]-O(4)-(5'-adenylyl)-L-tyrosine + phosphate = [glutamine synthetase]-L-tyrosine + ADP. It catalyses the reaction [glutamine synthetase]-L-tyrosine + ATP = [glutamine synthetase]-O(4)-(5'-adenylyl)-L-tyrosine + diphosphate. Involved in the regulation of glutamine synthetase GlnA, a key enzyme in the process to assimilate ammonia. When cellular nitrogen levels are high, the C-terminal adenylyl transferase (AT) inactivates GlnA by covalent transfer of an adenylyl group from ATP to specific tyrosine residue of GlnA, thus reducing its activity. Conversely, when nitrogen levels are low, the N-terminal adenylyl removase (AR) activates GlnA by removing the adenylyl group by phosphorolysis, increasing its activity. The regulatory region of GlnE binds the signal transduction protein PII (GlnB) which indicates the nitrogen status of the cell. The chain is Bifunctional glutamine synthetase adenylyltransferase/adenylyl-removing enzyme from Chromobacterium violaceum (strain ATCC 12472 / DSM 30191 / JCM 1249 / CCUG 213 / NBRC 12614 / NCIMB 9131 / NCTC 9757 / MK).